Here is a 160-residue protein sequence, read N- to C-terminus: Protein cornichon homolog 2 (160 aa).

Residues 1 to 10 lie on the Cytoplasmic side of the membrane; that stretch reads MAFTFAAFCY. A helical membrane pass occupies residues 11–31; sequence MLTLVLCASLIFFVIWHIIAF. Topologically, residues 32–72 are lumenal; sequence DELRTDFKNPIDQGNPARARERLKNIERICCLLRKLVVPEY. The chain crosses the membrane as a helical span at residues 73–93; that stretch reads SIHGLFCLMFLCAAEWVTLGL. Residues 94–138 lie on the Cytoplasmic side of the membrane; that stretch reads NIPLLFYHLWRYFHRPADGSEVMYDAVSIMNADILNYCQKESWCK. The helical transmembrane segment at 139 to 159 threads the bilayer; sequence LAFYLLSFFYYLYSMVYTLVS. F160 is a topological domain (lumenal).

This sequence belongs to the cornichon family. Acts as an auxiliary subunit for AMPA-selective glutamate receptors (AMPARs). Found in a complex with GRIA1, GRIA2, GRIA3, GRIA4, CNIH3, CACNG2, CACNG3, CACNG4, CACNG5, CACNG7 and CACNG8. Interacts with CACGN8. Interacts with GRIA1. Found in a complex with GRIA1, GRIA2, GRIA3, GRIA4, DLG4 and CACNG8. As to expression, expression is up-regulated in dorsolateral prefrontal cortex of patients with schizophrenia (postmortem brain study).

The protein localises to the endoplasmic reticulum membrane. It localises to the postsynaptic cell membrane. The protein resides in the cell projection. It is found in the dendrite. Its subcellular location is the dendritic spine. The protein localises to the postsynaptic density. In terms of biological role, regulates the trafficking and gating properties of AMPA-selective glutamate receptors (AMPARs). Promotes their targeting to the cell membrane and synapses and modulates their gating properties by regulating their rates of activation, deactivation and desensitization. Blocks CACNG8-mediated resensitization of AMPA receptors. The chain is Protein cornichon homolog 2 from Homo sapiens (Human).